Consider the following 515-residue polypeptide: Maturase K (515 aa).

This sequence belongs to the intron maturase 2 family. MatK subfamily.

It localises to the plastid. The protein localises to the chloroplast. In terms of biological role, usually encoded in the trnK tRNA gene intron. Probably assists in splicing its own and other chloroplast group II introns. The protein is Maturase K of Alpinia zerumbet (Shell ginger).